The sequence spans 528 residues: GMP synthase [glutamine-hydrolyzing] (528 aa).

Residues 22-212 (AILVLDFGSQ…VFKICQSQTN (191 aa)) form the Glutamine amidotransferase type-1 domain. The active-site Nucleophile is the cysteine 99. Catalysis depends on residues histidine 186 and glutamate 188. The GMPS ATP-PPase domain occupies 213-403 (WSLESNVETI…LGIKKEALYR (191 aa)). Residue 240 to 246 (SGGTDSL) coordinates ATP.

In terms of assembly, homodimer.

The catalysed reaction is XMP + L-glutamine + ATP + H2O = GMP + L-glutamate + AMP + diphosphate + 2 H(+). The protein operates within purine metabolism; GMP biosynthesis; GMP from XMP (L-Gln route): step 1/1. Its function is as follows. Catalyzes the synthesis of GMP from XMP. The sequence is that of GMP synthase [glutamine-hydrolyzing] from Borrelia garinii subsp. bavariensis (strain ATCC BAA-2496 / DSM 23469 / PBi) (Borreliella bavariensis).